Reading from the N-terminus, the 383-residue chain is MLYSPRLTDQILIVAGEASADLHAARTLHELQRLRPGLTAFGVGGPRLREAGLEALAPAEDISVMGLAEVLPRIPRILGILRMLGRAAAERRPKAALLVDLPDFNLRLAARLKKLGIPVVYYVSPTIWAWRQGRAKQIARVVDRMLCILPFEERFYEGTGVSARFVGHPFAERPPPGTPESYRSALGLPAARTTIAMVPGSRPSELKRLLPPMLEAAERLRAAHPDAQFVVPVAPTLDRAALEPYLAAHRTLEVRLVDGRTEEVVGASDAALVKSGTSTLEAGLMLRPMVVVYKLSWLSYAVARMLVKIAHVALVNILAGRGIVPELLQRDASPERMAAEVERLLGDRAAREAQIAALREVRASLGEPGAPLRVAEEVLGVMR.

It belongs to the LpxB family.

The enzyme catalyses a lipid X + a UDP-2-N,3-O-bis[(3R)-3-hydroxyacyl]-alpha-D-glucosamine = a lipid A disaccharide + UDP + H(+). It participates in bacterial outer membrane biogenesis; LPS lipid A biosynthesis. Its function is as follows. Condensation of UDP-2,3-diacylglucosamine and 2,3-diacylglucosamine-1-phosphate to form lipid A disaccharide, a precursor of lipid A, a phosphorylated glycolipid that anchors the lipopolysaccharide to the outer membrane of the cell. This is Lipid-A-disaccharide synthase from Anaeromyxobacter dehalogenans (strain 2CP-C).